Reading from the N-terminus, the 91-residue chain is Protein transport protein Sec61 subunit beta (91 aa).

A disordered region spans residues 1 to 45 (MSTSAQVPGGPAAQMKRRNNAQRQEAKASQRPTSTRSVGAGGSSS). Topologically, residues 1 to 62 (MSTSAQVPGG…DESQGLKVDP (62 aa)) are cytoplasmic. Residues 30–45 (QRPTSTRSVGAGGSSS) show a composition bias toward polar residues. The chain crosses the membrane as a helical span at residues 63-83 (VVVMVLSLGFIFSVVALHILA).

This sequence belongs to the SEC61-beta family. In terms of assembly, heterotrimeric complex composed of SEC61, SEB1 and SSS1.

Its subcellular location is the endoplasmic reticulum membrane. Functionally, necessary for protein translocation in the endoplasmic reticulum. This is Protein transport protein Sec61 subunit beta (SBH1) from Yarrowia lipolytica (strain CLIB 122 / E 150) (Yeast).